A 336-amino-acid polypeptide reads, in one-letter code: Protein-glutamate methylesterase/protein-glutamine glutaminase 1 (336 aa).

The Response regulatory domain maps to 2–119 (KIAIVNDMPL…GNPQEAAAPL (118 aa)). At aspartate 53 the chain carries 4-aspartylphosphate. Positions 147-336 (TASRQRLVAI…APRLLEIFPK (190 aa)) constitute a CheB-type methylesterase domain. Catalysis depends on residues serine 159, histidine 186, and aspartate 279.

It belongs to the CheB family. Post-translationally, phosphorylated by CheA. Phosphorylation of the N-terminal regulatory domain activates the methylesterase activity.

Its subcellular location is the cytoplasm. It catalyses the reaction [protein]-L-glutamate 5-O-methyl ester + H2O = L-glutamyl-[protein] + methanol + H(+). The catalysed reaction is L-glutaminyl-[protein] + H2O = L-glutamyl-[protein] + NH4(+). In terms of biological role, involved in chemotaxis. Part of a chemotaxis signal transduction system that modulates chemotaxis in response to various stimuli. Catalyzes the demethylation of specific methylglutamate residues introduced into the chemoreceptors (methyl-accepting chemotaxis proteins or MCP) by CheR. Also mediates the irreversible deamidation of specific glutamine residues to glutamic acid. This chain is Protein-glutamate methylesterase/protein-glutamine glutaminase 1, found in Pseudomonas fluorescens (strain Pf0-1).